We begin with the raw amino-acid sequence, 400 residues long: D(3) dopamine receptor (400 aa).

Topologically, residues 1–32 are extracellular; sequence MASLSQLSGHLNYTCGAENSTGASQARPHAYY. Residues N12 and N19 are each glycosylated (N-linked (GlcNAc...) asparagine). The chain crosses the membrane as a helical span at residues 33 to 55; that stretch reads ALSYCALILAIVFGNGLVCMAVL. At 56–65 the chain is on the cytoplasmic side; it reads KERALQTTTN. Residues 66–88 form a helical membrane-spanning segment; it reads YLVVSLAVADLLVATLVMPWVVY. Residues 89–104 lie on the Extracellular side of the membrane; that stretch reads LEVTGGVWNFSRICCD. N97 carries an N-linked (GlcNAc...) asparagine glycan. Residues C103 and C181 are joined by a disulfide bond. A helical membrane pass occupies residues 105–126; that stretch reads VFVTLDVMMCTASILNLCAISI. Eticlopride is bound at residue D110. Residues 127 to 149 lie on the Cytoplasmic side of the membrane; it reads DRYTAVVMPVHYQHGTGQSSCRR. The chain crosses the membrane as a helical span at residues 150–170; it reads VALMITAVWVLAFAVSCPLLF. The Extracellular segment spans residues 171–187; it reads GFNTTGDPTVCSISNPD. N-linked (GlcNAc...) asparagine glycosylation is present at N173. The helical transmembrane segment at 188–209 threads the bilayer; the sequence is FVIYSSVVSFYLPFGVTVLVYA. Residues 210–329 lie on the Cytoplasmic side of the membrane; that stretch reads RIYVVLKQRR…VPLREKKATQ (120 aa). The chain crosses the membrane as a helical span at residues 330–351; that stretch reads MVAIVLGAFIVCWLPFFLTHVL. Eticlopride-binding residues include F345 and H349. Residues 352–366 are Extracellular-facing; the sequence is NTHCQTCHVSPELYS. C355 and C358 form a disulfide bridge. Residues 367 to 386 form a helical membrane-spanning segment; sequence ATTWLGYVNSALNPVIYTTF. At 387–400 the chain is on the cytoplasmic side; the sequence is NIEFRKAFLKILSC.

It belongs to the G-protein coupled receptor 1 family. In terms of assembly, interacts with CLIC6. Interacts with GRK4. Interacts with PALM. Interacts with FLNA (via filamin repeat 21); increases PKA-mediated phosphorylation of FLNA. Phosphorylated by GRK4 (GRK4-alpha and GRK4-gamma). Post-translationally, palmitoylated. In terms of tissue distribution, brain.

It is found in the cell membrane. Functionally, dopamine receptor whose activity is mediated by G proteins which inhibit adenylyl cyclase. Promotes cell proliferation. This chain is D(3) dopamine receptor, found in Homo sapiens (Human).